The following is a 288-amino-acid chain: Formamidopyrimidine-DNA glycosylase (288 aa).

The active-site Schiff-base intermediate with DNA is proline 2. Catalysis depends on glutamate 3, which acts as the Proton donor. The active-site Proton donor; for beta-elimination activity is lysine 59. DNA-binding residues include histidine 93, arginine 112, and lysine 168. The FPG-type zinc finger occupies 254-288 (NVYGRGGEPCKRCGAPIKRVVVGGRSTHYCATCQR). Catalysis depends on arginine 278, which acts as the Proton donor; for delta-elimination activity.

The protein belongs to the FPG family. Monomer. Requires Zn(2+) as cofactor.

The enzyme catalyses Hydrolysis of DNA containing ring-opened 7-methylguanine residues, releasing 2,6-diamino-4-hydroxy-5-(N-methyl)formamidopyrimidine.. The catalysed reaction is 2'-deoxyribonucleotide-(2'-deoxyribose 5'-phosphate)-2'-deoxyribonucleotide-DNA = a 3'-end 2'-deoxyribonucleotide-(2,3-dehydro-2,3-deoxyribose 5'-phosphate)-DNA + a 5'-end 5'-phospho-2'-deoxyribonucleoside-DNA + H(+). In terms of biological role, involved in base excision repair of DNA damaged by oxidation or by mutagenic agents. Acts as a DNA glycosylase that recognizes and removes damaged bases. Has a preference for oxidized purines, such as 7,8-dihydro-8-oxoguanine (8-oxoG). Has AP (apurinic/apyrimidinic) lyase activity and introduces nicks in the DNA strand. Cleaves the DNA backbone by beta-delta elimination to generate a single-strand break at the site of the removed base with both 3'- and 5'-phosphates. The polypeptide is Formamidopyrimidine-DNA glycosylase (Corynebacterium jeikeium (strain K411)).